An 82-amino-acid chain; its full sequence is NADH-ubiquinone oxidoreductase 9.5 kDa subunit (82 aa).

The helical transmembrane segment at 25–43 (AYFYSCVIAGLGPVFLTVV) threads the bilayer.

This sequence belongs to the complex I NDUFA3 subunit family. As to quaternary structure, complex I is composed of about 40 different subunits.

Its subcellular location is the mitochondrion inner membrane. Its function is as follows. Accessory subunit of the mitochondrial membrane respiratory chain NADH dehydrogenase (Complex I), that is believed not to be involved in catalysis. Complex I functions in the transfer of electrons from NADH to the respiratory chain. The immediate electron acceptor for the enzyme is believed to be ubiquinone. This subunit binds ubiquinone. The sequence is that of NADH-ubiquinone oxidoreductase 9.5 kDa subunit (nuo9.5) from Neurospora crassa (strain ATCC 24698 / 74-OR23-1A / CBS 708.71 / DSM 1257 / FGSC 987).